Consider the following 766-residue polypeptide: Transcription factor GTE4 (766 aa).

Disordered regions lie at residues 87–108 (GTNS…PGDD), 234–262 (RDTT…PMEE), and 388–412 (GDKL…GDVG). Polar residues predominate over residues 238-250 (DAQQPAGLTSDSA). Residues 416 to 522 (GAGTKVFKNC…QIFEERWAVI (107 aa)) form the Bromo domain. Disordered regions lie at residues 544 to 606 (TMRS…NKRD) and 687 to 766 (ARAE…SDQT). A compositionally biased stretch (low complexity) spans 574–589 (PTTTPGRTPTSATPSG). The NET domain occupies 597–678 (PKANEPNKRD…NYKKGLSKKK (82 aa)). Over residues 736 to 766 (SRSSSSSSSSSSSSSSDSDSDSSSSSGSDQT) the composition is skewed to low complexity.

As to expression, ubiquitously expressed.

Its subcellular location is the nucleus. Involved in the activation and maintenance of cell division in the meristems and by this controls cell numbers in differentiated organs. Its action in cell cycle regulation may be directed through the RB-E2F pathway. This chain is Transcription factor GTE4 (GTE4), found in Arabidopsis thaliana (Mouse-ear cress).